A 163-amino-acid polypeptide reads, in one-letter code: S-ribosylhomocysteine lyase (163 aa).

H54, H58, and C128 together coordinate Fe cation.

The protein belongs to the LuxS family. In terms of assembly, homodimer. The cofactor is Fe cation.

The catalysed reaction is S-(5-deoxy-D-ribos-5-yl)-L-homocysteine = (S)-4,5-dihydroxypentane-2,3-dione + L-homocysteine. Its function is as follows. Involved in the synthesis of autoinducer 2 (AI-2) which is secreted by bacteria and is used to communicate both the cell density and the metabolic potential of the environment. The regulation of gene expression in response to changes in cell density is called quorum sensing. Catalyzes the transformation of S-ribosylhomocysteine (RHC) to homocysteine (HC) and 4,5-dihydroxy-2,3-pentadione (DPD). In Wolinella succinogenes (strain ATCC 29543 / DSM 1740 / CCUG 13145 / JCM 31913 / LMG 7466 / NCTC 11488 / FDC 602W) (Vibrio succinogenes), this protein is S-ribosylhomocysteine lyase.